We begin with the raw amino-acid sequence, 703 residues long: Polyribonucleotide nucleotidyltransferase (703 aa).

2 residues coordinate Mg(2+): D484 and D490. Positions 551 to 610 (PTVTTLRVLPEKISVIIGPAGKNIKKIIEETGVKIDLDPTGLVKIYATSKIAAEKAIDMI) constitute a KH domain. The S1 motif domain maps to 620–688 (GEVYLGKVTR…DQGRIKVSLK (69 aa)).

Belongs to the polyribonucleotide nucleotidyltransferase family. Mg(2+) is required as a cofactor.

The protein resides in the cytoplasm. The enzyme catalyses RNA(n+1) + phosphate = RNA(n) + a ribonucleoside 5'-diphosphate. In terms of biological role, involved in mRNA degradation. Catalyzes the phosphorolysis of single-stranded polyribonucleotides processively in the 3'- to 5'-direction. The protein is Polyribonucleotide nucleotidyltransferase of Sulfurihydrogenibium sp. (strain YO3AOP1).